A 112-amino-acid chain; its full sequence is ATP synthase subunit c (112 aa).

Helical transmembrane passes span 36–56 (FSVL…AIGM) and 81–101 (MFIA…IALI).

It belongs to the ATPase C chain family. F-type ATPases have 2 components, F(1) - the catalytic core - and F(0) - the membrane proton channel. F(1) has five subunits: alpha(3), beta(3), gamma(1), delta(1), epsilon(1). F(0) has three main subunits: a(1), b(2) and c(10-14). The alpha and beta chains form an alternating ring which encloses part of the gamma chain. F(1) is attached to F(0) by a central stalk formed by the gamma and epsilon chains, while a peripheral stalk is formed by the delta and b chains.

The protein localises to the cell inner membrane. F(1)F(0) ATP synthase produces ATP from ADP in the presence of a proton or sodium gradient. F-type ATPases consist of two structural domains, F(1) containing the extramembraneous catalytic core and F(0) containing the membrane proton channel, linked together by a central stalk and a peripheral stalk. During catalysis, ATP synthesis in the catalytic domain of F(1) is coupled via a rotary mechanism of the central stalk subunits to proton translocation. Functionally, key component of the F(0) channel; it plays a direct role in translocation across the membrane. A homomeric c-ring of between 10-14 subunits forms the central stalk rotor element with the F(1) delta and epsilon subunits. This Campylobacter jejuni subsp. jejuni serotype O:6 (strain 81116 / NCTC 11828) protein is ATP synthase subunit c.